Reading from the N-terminus, the 379-residue chain is Dihydroorotate dehydrogenase (quinone) (379 aa).

Residues 79 to 83 (AGCDK) and A103 contribute to the FMN site. K83 serves as a coordination point for substrate. 128 to 131 (NRLG) is a substrate binding site. FMN contacts are provided by N160 and N193. Residue N193 coordinates substrate. S196 serves as the catalytic Nucleophile. N198 lines the substrate pocket. 2 residues coordinate FMN: K231 and T259. A substrate-binding site is contributed by 260 to 261 (NT). FMN-binding positions include G289, G318, and 339–340 (YT).

The protein belongs to the dihydroorotate dehydrogenase family. Type 2 subfamily. In terms of assembly, monomer. Requires FMN as cofactor.

It is found in the cell membrane. It carries out the reaction (S)-dihydroorotate + a quinone = orotate + a quinol. It functions in the pathway pyrimidine metabolism; UMP biosynthesis via de novo pathway; orotate from (S)-dihydroorotate (quinone route): step 1/1. In terms of biological role, catalyzes the conversion of dihydroorotate to orotate with quinone as electron acceptor. The polypeptide is Dihydroorotate dehydrogenase (quinone) (Crocosphaera subtropica (strain ATCC 51142 / BH68) (Cyanothece sp. (strain ATCC 51142))).